Reading from the N-terminus, the 448-residue chain is tRNA wybutosine-synthesizing protein 2 homolog (448 aa).

S-adenosyl-L-methionine is bound by residues serine 218, lysine 225, glutamate 265, and 293–294 (DN).

Belongs to the class I-like SAM-binding methyltransferase superfamily. TRM5/TYW2 family.

The catalysed reaction is 4-demethylwyosine(37) in tRNA(Phe) + S-adenosyl-L-methionine = 4-demethyl-7-[(3S)-3-amino-3-carboxypropyl]wyosine(37) in tRNA(Phe) + S-methyl-5'-thioadenosine + H(+). It participates in tRNA modification; wybutosine-tRNA(Phe) biosynthesis. Its function is as follows. S-adenosyl-L-methionine-dependent transferase that acts as a component of the wybutosine biosynthesis pathway. Wybutosine is a hyper modified guanosine with a tricyclic base found at the 3'-position adjacent to the anticodon of eukaryotic phenylalanine tRNA. Catalyzes the transfer of the alpha-amino-alpha-carboxypropyl (acp) group from S-adenosyl-L-methionine to the C-7 position of 4-demethylwyosine (imG-14) to produce wybutosine-86. This is tRNA wybutosine-synthesizing protein 2 homolog (TRMT12) from Homo sapiens (Human).